A 273-amino-acid polypeptide reads, in one-letter code: Ribosomal RNA small subunit methyltransferase A (273 aa).

S-adenosyl-L-methionine contacts are provided by Asn-20, Leu-22, Gly-47, Glu-68, Asp-90, and Asn-110.

The protein belongs to the class I-like SAM-binding methyltransferase superfamily. rRNA adenine N(6)-methyltransferase family. RsmA subfamily.

It is found in the cytoplasm. The catalysed reaction is adenosine(1518)/adenosine(1519) in 16S rRNA + 4 S-adenosyl-L-methionine = N(6)-dimethyladenosine(1518)/N(6)-dimethyladenosine(1519) in 16S rRNA + 4 S-adenosyl-L-homocysteine + 4 H(+). Specifically dimethylates two adjacent adenosines (A1518 and A1519) in the loop of a conserved hairpin near the 3'-end of 16S rRNA in the 30S particle. May play a critical role in biogenesis of 30S subunits. In Chlorobium luteolum (strain DSM 273 / BCRC 81028 / 2530) (Pelodictyon luteolum), this protein is Ribosomal RNA small subunit methyltransferase A.